Reading from the N-terminus, the 376-residue chain is Pyruvate dehydrogenase E1 component subunit beta-2, mitochondrial (376 aa).

A mitochondrion-targeting transit peptide spans 1 to 36 (MLGAARRQLGSGPMLGQVLRRLRPATAAAADAARAY). Glutamate 99 contacts thiamine diphosphate. Residues isoleucine 152, alanine 200, isoleucine 201, and aspartate 203 each coordinate K(+).

In terms of assembly, tetramer of 2 alpha and 2 beta subunits. The cofactor is thiamine diphosphate.

The protein resides in the mitochondrion matrix. The catalysed reaction is N(6)-[(R)-lipoyl]-L-lysyl-[protein] + pyruvate + H(+) = N(6)-[(R)-S(8)-acetyldihydrolipoyl]-L-lysyl-[protein] + CO2. Functionally, the pyruvate dehydrogenase complex catalyzes the overall conversion of pyruvate to acetyl-CoA and CO(2). It contains multiple copies of three enzymatic components: pyruvate dehydrogenase (E1), dihydrolipoamide acetyltransferase (E2) and lipoamide dehydrogenase (E3). This Oryza sativa subsp. japonica (Rice) protein is Pyruvate dehydrogenase E1 component subunit beta-2, mitochondrial.